We begin with the raw amino-acid sequence, 613 residues long: tRNA 5-methylaminomethyl-2-thiouridine biosynthesis bifunctional protein MnmC (613 aa).

Positions 1–225 (MKKAKLIFKD…KREMIKAYLE (225 aa)) are tRNA (mnm(5)s(2)U34)-methyltransferase. Residues 252 to 613 (IGAGISSAVL…FLVRKLKKGL (362 aa)) are FAD-dependent cmnm(5)s(2)U34 oxidoreductase.

The protein in the N-terminal section; belongs to the methyltransferase superfamily. tRNA (mnm(5)s(2)U34)-methyltransferase family. In the C-terminal section; belongs to the DAO family. The cofactor is FAD.

The protein localises to the cytoplasm. The catalysed reaction is 5-aminomethyl-2-thiouridine(34) in tRNA + S-adenosyl-L-methionine = 5-methylaminomethyl-2-thiouridine(34) in tRNA + S-adenosyl-L-homocysteine + H(+). Functionally, catalyzes the last two steps in the biosynthesis of 5-methylaminomethyl-2-thiouridine (mnm(5)s(2)U) at the wobble position (U34) in tRNA. Catalyzes the FAD-dependent demodification of cmnm(5)s(2)U34 to nm(5)s(2)U34, followed by the transfer of a methyl group from S-adenosyl-L-methionine to nm(5)s(2)U34, to form mnm(5)s(2)U34. This chain is tRNA 5-methylaminomethyl-2-thiouridine biosynthesis bifunctional protein MnmC, found in Campylobacter jejuni subsp. doylei (strain ATCC BAA-1458 / RM4099 / 269.97).